Here is a 196-residue protein sequence, read N- to C-terminus: ATP-dependent Clp protease proteolytic subunit (196 aa).

Serine 96 serves as the catalytic Nucleophile. Residue histidine 121 is part of the active site.

It belongs to the peptidase S14 family. Fourteen ClpP subunits assemble into 2 heptameric rings which stack back to back to give a disk-like structure with a central cavity, resembling the structure of eukaryotic proteasomes.

The protein localises to the cytoplasm. It catalyses the reaction Hydrolysis of proteins to small peptides in the presence of ATP and magnesium. alpha-casein is the usual test substrate. In the absence of ATP, only oligopeptides shorter than five residues are hydrolyzed (such as succinyl-Leu-Tyr-|-NHMec, and Leu-Tyr-Leu-|-Tyr-Trp, in which cleavage of the -Tyr-|-Leu- and -Tyr-|-Trp bonds also occurs).. Functionally, cleaves peptides in various proteins in a process that requires ATP hydrolysis. Has a chymotrypsin-like activity. Plays a major role in the degradation of misfolded proteins. This Streptococcus pneumoniae (strain P1031) protein is ATP-dependent Clp protease proteolytic subunit.